The primary structure comprises 197 residues: Probable NADPH:quinone oxidoreductase 1 (197 aa).

The protein belongs to the SsuE family. As to quaternary structure, homotetramer. Requires FMN as cofactor.

It carries out the reaction a quinone + NADH + H(+) = a quinol + NAD(+). The catalysed reaction is a quinone + NADPH + H(+) = a quinol + NADP(+). In terms of biological role, the enzyme apparently serves as a quinone reductase in connection with conjugation reactions of hydroquinones involved in detoxification pathways. This chain is Probable NADPH:quinone oxidoreductase 1, found in Oryza sativa subsp. japonica (Rice).